The chain runs to 201 residues: Small ribosomal subunit protein uS4c (201 aa).

An S4 RNA-binding domain is found at Met-89–Asn-150.

This sequence belongs to the universal ribosomal protein uS4 family. Part of the 30S ribosomal subunit. Contacts protein S5. The interaction surface between S4 and S5 is involved in control of translational fidelity.

It localises to the plastid. The protein localises to the chloroplast. One of the primary rRNA binding proteins, it binds directly to 16S rRNA where it nucleates assembly of the body of the 30S subunit. In terms of biological role, with S5 and S12 plays an important role in translational accuracy. The polypeptide is Small ribosomal subunit protein uS4c (rps4) (Acorus calamus (Sweet flag)).